The following is a 150-amino-acid chain: MPSILLINGPNLNLLGTREPHLYGRTTLPQLEDNAKALAAAKGVKLESFHSNHEGRIIDRIHEARGHTDAIIINPGAFTHTSVAIRDALIGVSVPFIEVHITNVHAREEFRHHSYLSDKAAACIIGLGTYGYEAAIEYAAREIISAKEVY.

Y23 functions as the Proton acceptor in the catalytic mechanism. Substrate is bound by residues N74, H80, and D87. H100 acts as the Proton donor in catalysis. Substrate contacts are provided by residues 101–102 (IT) and R111.

Belongs to the type-II 3-dehydroquinase family. Homododecamer. Adopts a ring-like structure, composed of an arrangement of two hexameric rings stacked on top of one another.

The catalysed reaction is 3-dehydroquinate = 3-dehydroshikimate + H2O. It participates in aromatic compound metabolism; 3,4-dihydroxybenzoate biosynthesis; 3,4-dihydroxybenzoate from 3-dehydroquinate: step 1/2. Functionally, is involved in the catabolism of quinate. Allows the utilization of quinate as carbon source via the beta-ketoadipate pathway. In Aspergillus fumigatus (strain ATCC MYA-4609 / CBS 101355 / FGSC A1100 / Af293) (Neosartorya fumigata), this protein is Catabolic 3-dehydroquinase 2.